The chain runs to 383 residues: Succinyl-diaminopimelate desuccinylase (383 aa).

Residue H73 coordinates Zn(2+). D75 is an active-site residue. D107 is a binding site for Zn(2+). The active-site Proton acceptor is the E141. E142, E170, and H356 together coordinate Zn(2+).

This sequence belongs to the peptidase M20A family. DapE subfamily. In terms of assembly, homodimer. It depends on Zn(2+) as a cofactor. Requires Co(2+) as cofactor.

The catalysed reaction is N-succinyl-(2S,6S)-2,6-diaminopimelate + H2O = (2S,6S)-2,6-diaminopimelate + succinate. The protein operates within amino-acid biosynthesis; L-lysine biosynthesis via DAP pathway; LL-2,6-diaminopimelate from (S)-tetrahydrodipicolinate (succinylase route): step 3/3. Its function is as follows. Catalyzes the hydrolysis of N-succinyl-L,L-diaminopimelic acid (SDAP), forming succinate and LL-2,6-diaminopimelate (DAP), an intermediate involved in the bacterial biosynthesis of lysine and meso-diaminopimelic acid, an essential component of bacterial cell walls. This is Succinyl-diaminopimelate desuccinylase from Pseudomonas putida (strain ATCC 700007 / DSM 6899 / JCM 31910 / BCRC 17059 / LMG 24140 / F1).